A 709-amino-acid chain; its full sequence is Elongation factor G (709 aa).

In terms of domain architecture, tr-type G spans 8–290 (NRYRNIGISA…AVIQYMPAPQ (283 aa)). Residues 17-24 (AHIDAGKT), 88-92 (DTPGH), and 142-145 (NKMD) contribute to the GTP site.

It belongs to the TRAFAC class translation factor GTPase superfamily. Classic translation factor GTPase family. EF-G/EF-2 subfamily.

Its subcellular location is the cytoplasm. Functionally, catalyzes the GTP-dependent ribosomal translocation step during translation elongation. During this step, the ribosome changes from the pre-translocational (PRE) to the post-translocational (POST) state as the newly formed A-site-bound peptidyl-tRNA and P-site-bound deacylated tRNA move to the P and E sites, respectively. Catalyzes the coordinated movement of the two tRNA molecules, the mRNA and conformational changes in the ribosome. In Psychrobacter sp. (strain PRwf-1), this protein is Elongation factor G.